A 373-amino-acid chain; its full sequence is Chaperone protein DnaJ (373 aa).

The region spanning 4-69 (SYYEILEITQ…EKRAIYDRYG (66 aa)) is the J domain. The segment at 135 to 212 (GCKKNIDFTY…CKGLGYNESK (78 aa)) adopts a CR-type zinc-finger fold. Zn(2+) contacts are provided by Cys148, Cys151, Cys164, Cys167, Cys186, Cys189, Cys200, and Cys203. CXXCXGXG motif repeat units lie at residues 148 to 155 (CKTCNGTG), 164 to 171 (CPKCQGRG), 186 to 193 (CPDCQGIG), and 200 to 207 (CSDCKGLG).

It belongs to the DnaJ family. In terms of assembly, homodimer. Requires Zn(2+) as cofactor.

It localises to the cytoplasm. Its function is as follows. Participates actively in the response to hyperosmotic and heat shock by preventing the aggregation of stress-denatured proteins and by disaggregating proteins, also in an autonomous, DnaK-independent fashion. Unfolded proteins bind initially to DnaJ; upon interaction with the DnaJ-bound protein, DnaK hydrolyzes its bound ATP, resulting in the formation of a stable complex. GrpE releases ADP from DnaK; ATP binding to DnaK triggers the release of the substrate protein, thus completing the reaction cycle. Several rounds of ATP-dependent interactions between DnaJ, DnaK and GrpE are required for fully efficient folding. Also involved, together with DnaK and GrpE, in the DNA replication of plasmids through activation of initiation proteins. This Campylobacter jejuni subsp. jejuni serotype O:2 (strain ATCC 700819 / NCTC 11168) protein is Chaperone protein DnaJ.